A 287-amino-acid polypeptide reads, in one-letter code: Eukaryotic translation initiation factor 3 subunit F (287 aa).

The region spanning 12-142 (VRVHPVVLFQ…IKAYVCVSLG (131 aa)) is the MPN domain.

The protein belongs to the eIF-3 subunit F family. As to quaternary structure, component of the eukaryotic translation initiation factor 3 (eIF-3) complex.

Its subcellular location is the cytoplasm. Component of the eukaryotic translation initiation factor 3 (eIF-3) complex, which is involved in protein synthesis of a specialized repertoire of mRNAs and, together with other initiation factors, stimulates binding of mRNA and methionyl-tRNAi to the 40S ribosome. The eIF-3 complex specifically targets and initiates translation of a subset of mRNAs involved in cell proliferation. The protein is Eukaryotic translation initiation factor 3 subunit F of Aedes aegypti (Yellowfever mosquito).